The sequence spans 599 residues: mRNA export factor MEX67 (599 aa).

Ser-2 is subject to N-acetylserine. LRR repeat units lie at residues 163-184 (IVES…STLA) and 189-210 (NLKN…EVWK). The LRRCT domain maps to 224 to 262 (NPITTDKLYRTEMLRLFPKLVVLDNVIVRDEQKLQTVYS). One can recognise an NTF2 domain in the interval 280–467 (SSTDFATNFL…VIIASDLLTV (188 aa)). A disordered region spans residues 408–439 (KPELESNKKTGKNNYQKNRRYNHGYNSTSNNK). One can recognise a TAP-C domain in the interval 546 to 599 (PVQLELLNKLHLETKLNAEYTFMLAEQSNWNYEVAIKGFQSSMNGIPREAFVQF).

The protein belongs to the NXF family. In terms of assembly, interacts with nucleoporin complex NUP84 and MTR2. Interacts with MIP6.

It localises to the nucleus. The protein resides in the cytoplasm. Its function is as follows. Involved in the export of mRNA from the nucleus to the cytoplasm. This Saccharomyces cerevisiae (strain ATCC 204508 / S288c) (Baker's yeast) protein is mRNA export factor MEX67 (MEX67).